The chain runs to 145 residues: D-aminoacyl-tRNA deacylase (145 aa).

The Gly-cisPro motif, important for rejection of L-amino acids motif lies at 137 to 138 (GP).

The protein belongs to the DTD family. In terms of assembly, homodimer.

The protein localises to the cytoplasm. It catalyses the reaction glycyl-tRNA(Ala) + H2O = tRNA(Ala) + glycine + H(+). It carries out the reaction a D-aminoacyl-tRNA + H2O = a tRNA + a D-alpha-amino acid + H(+). Its function is as follows. An aminoacyl-tRNA editing enzyme that deacylates mischarged D-aminoacyl-tRNAs. Also deacylates mischarged glycyl-tRNA(Ala), protecting cells against glycine mischarging by AlaRS. Acts via tRNA-based rather than protein-based catalysis; rejects L-amino acids rather than detecting D-amino acids in the active site. By recycling D-aminoacyl-tRNA to D-amino acids and free tRNA molecules, this enzyme counteracts the toxicity associated with the formation of D-aminoacyl-tRNA entities in vivo and helps enforce protein L-homochirality. The polypeptide is D-aminoacyl-tRNA deacylase (Shewanella halifaxensis (strain HAW-EB4)).